The chain runs to 83 residues: ATP synthase subunit c (83 aa).

Transmembrane regions (helical) follow at residues Ile-10–Leu-30 and Met-52–Phe-72.

It belongs to the ATPase C chain family. In terms of assembly, F-type ATPases have 2 components, F(1) - the catalytic core - and F(0) - the membrane proton channel. F(1) has five subunits: alpha(3), beta(3), gamma(1), delta(1), epsilon(1). F(0) has three main subunits: a(1), b(2) and c(10-14). The alpha and beta chains form an alternating ring which encloses part of the gamma chain. F(1) is attached to F(0) by a central stalk formed by the gamma and epsilon chains, while a peripheral stalk is formed by the delta and b chains.

It localises to the cell inner membrane. Functionally, f(1)F(0) ATP synthase produces ATP from ADP in the presence of a proton or sodium gradient. F-type ATPases consist of two structural domains, F(1) containing the extramembraneous catalytic core and F(0) containing the membrane proton channel, linked together by a central stalk and a peripheral stalk. During catalysis, ATP synthesis in the catalytic domain of F(1) is coupled via a rotary mechanism of the central stalk subunits to proton translocation. Key component of the F(0) channel; it plays a direct role in translocation across the membrane. A homomeric c-ring of between 10-14 subunits forms the central stalk rotor element with the F(1) delta and epsilon subunits. In Shewanella baltica (strain OS223), this protein is ATP synthase subunit c.